A 495-amino-acid chain; its full sequence is ATP synthase subunit beta, chloroplastic (495 aa).

An ATP-binding site is contributed by 172 to 179 (GGAGVGKT).

The protein belongs to the ATPase alpha/beta chains family. In terms of assembly, F-type ATPases have 2 components, CF(1) - the catalytic core - and CF(0) - the membrane proton channel. CF(1) has five subunits: alpha(3), beta(3), gamma(1), delta(1), epsilon(1). CF(0) has four main subunits: a(1), b(1), b'(1) and c(9-12).

It is found in the plastid. Its subcellular location is the chloroplast thylakoid membrane. It carries out the reaction ATP + H2O + 4 H(+)(in) = ADP + phosphate + 5 H(+)(out). Its function is as follows. Produces ATP from ADP in the presence of a proton gradient across the membrane. The catalytic sites are hosted primarily by the beta subunits. In Pteridium aquilinum (Bracken fern), this protein is ATP synthase subunit beta, chloroplastic.